The chain runs to 156 residues: Myosin, essential light chain, adductor muscle (156 aa).

2 consecutive EF-hand domains span residues 6–43 and 81–116; these read DEIDDLKDVFELFDFWDGRDGAVDAFKLGDVCRCLGIN and GTFADYMEAFKTFDREGQGFISGAELRHVLTALGER.

In terms of biological role, in molluscan muscle, calcium regulation is associated with myosin rather than with actin. Muscle myosin contains two types of light chains: the catalytic light chain, essential for ATPase activity, and the regulatory light chain, a calcium-binding protein responsible for Ca(2+) dependent binding and Ca(2+) dependent Mg-ATPase activity. This chain is Myosin, essential light chain, adductor muscle, found in Mizuhopecten yessoensis (Japanese scallop).